Here is a 23-residue protein sequence, read N- to C-terminus: Cysteine-rich venom protein 24 (23 aa).

The segment at 1-23 (VDFASESXNKRENQQIVDKHNAL) is disordered. Residues 8 to 23 (XNKRENQQIVDKHNAL) show a composition bias toward basic and acidic residues.

It belongs to the CRISP family. In terms of processing, contains 8 disulfide bonds. As to expression, expressed by the venom gland.

It localises to the secreted. The sequence is that of Cysteine-rich venom protein 24 from Naja kaouthia (Monocled cobra).